A 1004-amino-acid chain; its full sequence is 2-oxoglutarate dehydrogenase E1 component (1004 aa).

It belongs to the alpha-ketoglutarate dehydrogenase family. As to quaternary structure, homodimer. Part of the 2-oxoglutarate dehydrogenase (OGDH) complex composed of E1 (2-oxoglutarate dehydrogenase), E2 (dihydrolipoamide succinyltransferase) and E3 (dihydrolipoamide dehydrogenase); the complex contains multiple copies of the three enzymatic components (E1, E2 and E3). Thiamine diphosphate is required as a cofactor.

It carries out the reaction N(6)-[(R)-lipoyl]-L-lysyl-[protein] + 2-oxoglutarate + H(+) = N(6)-[(R)-S(8)-succinyldihydrolipoyl]-L-lysyl-[protein] + CO2. In terms of biological role, E1 component of the 2-oxoglutarate dehydrogenase (OGDH) complex which catalyzes the decarboxylation of 2-oxoglutarate, the first step in the conversion of 2-oxoglutarate to succinyl-CoA and CO(2). The chain is 2-oxoglutarate dehydrogenase E1 component from Brucella abortus (strain S19).